We begin with the raw amino-acid sequence, 721 residues long: Ribonucleoside-diphosphate reductase subunit alpha (721 aa).

Residues Thr159, 175 to 176 (SC), Gly204, 384 to 388 (NLCSE), and 589 to 593 (PTGSI) contribute to the substrate site. A disulfide bridge connects residues Cys176 and Cys413. The active-site Proton acceptor is the Asn384. Catalysis depends on Cys386, which acts as the Cysteine radical intermediate. The Proton acceptor role is filled by Glu388.

The protein belongs to the ribonucleoside diphosphate reductase large chain family. In terms of assembly, tetramer of two alpha and two beta subunits.

The enzyme catalyses a 2'-deoxyribonucleoside 5'-diphosphate + [thioredoxin]-disulfide + H2O = a ribonucleoside 5'-diphosphate + [thioredoxin]-dithiol. Its activity is regulated as follows. Under complex allosteric control mediated by deoxynucleoside triphosphates and ATP binding. The type of nucleotide bound at the specificity site determines substrate preference. It seems probable that ATP makes the enzyme reduce CDP and UDP, dGTP favors ADP reduction and dTTP favors GDP reduction. In terms of biological role, provides the precursors necessary for DNA synthesis. Catalyzes the biosynthesis of deoxyribonucleotides from the corresponding ribonucleotides. This chain is Ribonucleoside-diphosphate reductase subunit alpha (nrdE), found in Mycoplasma pneumoniae (strain ATCC 29342 / M129 / Subtype 1) (Mycoplasmoides pneumoniae).